Consider the following 520-residue polypeptide: 2-isopropylmalate synthase (520 aa).

The Pyruvate carboxyltransferase domain maps to 12–274 (IRIFDTTLRD…DSAINTPRIV (263 aa)). Residues Asp21, His209, His211, and Asn245 each coordinate Mn(2+). A regulatory domain region spans residues 396–520 (RLASMTISDV…VVAGKTAAVA (125 aa)).

It belongs to the alpha-IPM synthase/homocitrate synthase family. LeuA type 1 subfamily. In terms of assembly, homodimer. It depends on Mn(2+) as a cofactor.

The protein localises to the cytoplasm. It catalyses the reaction 3-methyl-2-oxobutanoate + acetyl-CoA + H2O = (2S)-2-isopropylmalate + CoA + H(+). It participates in amino-acid biosynthesis; L-leucine biosynthesis; L-leucine from 3-methyl-2-oxobutanoate: step 1/4. In terms of biological role, catalyzes the condensation of the acetyl group of acetyl-CoA with 3-methyl-2-oxobutanoate (2-ketoisovalerate) to form 3-carboxy-3-hydroxy-4-methylpentanoate (2-isopropylmalate). The chain is 2-isopropylmalate synthase from Xanthomonas euvesicatoria pv. vesicatoria (strain 85-10) (Xanthomonas campestris pv. vesicatoria).